Here is a 452-residue protein sequence, read N- to C-terminus: Enolase (452 aa).

Residue Gln-167 participates in (2R)-2-phosphoglycerate binding. The active-site Proton donor is the Glu-209. Asp-250, Glu-307, and Asp-334 together coordinate Mg(2+). (2R)-2-phosphoglycerate-binding residues include Lys-359, Arg-388, Ser-389, and Lys-410. The active-site Proton acceptor is Lys-359.

It belongs to the enolase family. It depends on Mg(2+) as a cofactor.

The protein resides in the cytoplasm. It is found in the secreted. The protein localises to the cell surface. It catalyses the reaction (2R)-2-phosphoglycerate = phosphoenolpyruvate + H2O. It functions in the pathway carbohydrate degradation; glycolysis; pyruvate from D-glyceraldehyde 3-phosphate: step 4/5. In terms of biological role, catalyzes the reversible conversion of 2-phosphoglycerate (2-PG) into phosphoenolpyruvate (PEP). It is essential for the degradation of carbohydrates via glycolysis. In Mesomycoplasma hyopneumoniae (strain 7448) (Mycoplasma hyopneumoniae), this protein is Enolase.